Reading from the N-terminus, the 427-residue chain is Delta(14)-sterol reductase (427 aa).

At M1–W25 the chain is on the cytoplasmic side. A helical membrane pass occupies residues L26–Y46. Over Q47 to T70 the chain is Periplasmic. A helical transmembrane segment spans residues W71–A91. Topologically, residues P92 to R110 are cytoplasmic. The helical transmembrane segment at M111–G131 threads the bilayer. The Periplasmic segment spans residues W132–Q141. Residues L142–F162 traverse the membrane as a helical segment. Over W163–K197 the chain is Cytoplasmic. A helical membrane pass occupies residues L198–A218. Over K219–T226 the chain is Periplasmic. Residues V227–I247 form a helical membrane-spanning segment. Residues H248 to K262 are Cytoplasmic-facing. A helical transmembrane segment spans residues F263 to A283. Topologically, residues Q284–H291 are periplasmic. The helical transmembrane segment at D292–F312 threads the bilayer. At R313–R356 the chain is on the cytoplasmic side. Residues K319, R323, L347, W352, and N359–Y360 each bind NADP(+). The chain crosses the membrane as a helical span at residues H357 to G377. Residue S378 is a topological domain, periplasmic. A helical transmembrane segment spans residues P379–D399. NADP(+)-binding positions include D399, C403–Y407, and Y414. Over D400–Y427 the chain is Cytoplasmic.

Belongs to the ERG4/ERG24 family.

The protein resides in the cell inner membrane. It catalyses the reaction 4,4-dimethyl-5alpha-cholesta-8,24-dien-3beta-ol + NADP(+) = 4,4-dimethyl-5alpha-cholesta-8,14,24-trien-3beta-ol + NADPH + H(+). It participates in steroid biosynthesis; zymosterol biosynthesis; zymosterol from lanosterol. In terms of biological role, reduces the C14=C15 double bond of 4,4-dimethyl-cholesta-8,14,24-trienol to produce 4,4-dimethyl-cholesta-8,24-dienol. Complements the deletion of the Delta(14)-sterol reductase gene ERG24 in yeast. The chain is Delta(14)-sterol reductase from Methylotuvimicrobium alcaliphilum (strain DSM 19304 / NCIMB 14124 / VKM B-2133 / 20Z) (Methylomicrobium alcaliphilum).